The following is a 208-amino-acid chain: Imidazoleglycerol-phosphate dehydratase (208 aa).

It belongs to the imidazoleglycerol-phosphate dehydratase family.

The protein resides in the cytoplasm. It catalyses the reaction D-erythro-1-(imidazol-4-yl)glycerol 3-phosphate = 3-(imidazol-4-yl)-2-oxopropyl phosphate + H2O. It participates in amino-acid biosynthesis; L-histidine biosynthesis; L-histidine from 5-phospho-alpha-D-ribose 1-diphosphate: step 6/9. In Pseudarthrobacter chlorophenolicus (strain ATCC 700700 / DSM 12829 / CIP 107037 / JCM 12360 / KCTC 9906 / NCIMB 13794 / A6) (Arthrobacter chlorophenolicus), this protein is Imidazoleglycerol-phosphate dehydratase.